The sequence spans 428 residues: D-alanine--D-alanine ligase (428 aa).

Positions 205 to 424 (KVVLDAAGIP…YTELITRLIE (220 aa)) constitute an ATP-grasp domain. 237 to 299 (DAGLTYPLFV…EQGIDGREIE (63 aa)) lines the ATP pocket. The Mg(2+) site is built by Asp378, Glu391, and Asn393.

It belongs to the D-alanine--D-alanine ligase family. It depends on Mg(2+) as a cofactor. Mn(2+) serves as cofactor.

The protein resides in the cytoplasm. It carries out the reaction 2 D-alanine + ATP = D-alanyl-D-alanine + ADP + phosphate + H(+). Its pathway is cell wall biogenesis; peptidoglycan biosynthesis. Functionally, cell wall formation. This is D-alanine--D-alanine ligase from Bifidobacterium longum (strain NCC 2705).